A 135-amino-acid polypeptide reads, in one-letter code: Helix-loop-helix protein 2 (135 aa).

Residues methionine 1–serine 80 are disordered. Over residues aspartate 10–proline 21 the composition is skewed to basic and acidic residues. Residues lysine 68 to serine 80 show a composition bias toward basic residues. Residues lysine 77–leucine 129 form the bHLH domain.

Homodimer. Interacts and may form heterodimers with STAT3.

The protein resides in the nucleus. In terms of biological role, transcription factor which binds the E box motif 5'-CA[TC][AG]TG-3'. Involved in regulating energy expenditure, body mass, voluntary physical activity, mating behavior and reproductive longevity, acting through the hypothalamic-pituitary-gonadal axis. Acts as a transcriptional activator of target genes, including NDN, PCSK1, MC4R. Is also a transcriptional activator of KISS1. May act centrally to regulate function of both white and brown adipose tissue. Together with NHLH1, required to maintain migration and survival of cells in the anterior extramural migration stream (aes), which forms the precerebellar nuclei. Also, in concert with NHLH1, may determine fate of gonadotropin releasing hormone-1 (GnRH-1) neurons. The sequence is that of Helix-loop-helix protein 2 (NHLH2) from Homo sapiens (Human).